The following is a 511-amino-acid chain: Bifunctional purine biosynthesis protein PurH (511 aa).

The MGS-like domain maps to 1–145 (MKRRALVSVS…KNHQHVTVVV (145 aa)).

It belongs to the PurH family.

It carries out the reaction (6R)-10-formyltetrahydrofolate + 5-amino-1-(5-phospho-beta-D-ribosyl)imidazole-4-carboxamide = 5-formamido-1-(5-phospho-D-ribosyl)imidazole-4-carboxamide + (6S)-5,6,7,8-tetrahydrofolate. The catalysed reaction is IMP + H2O = 5-formamido-1-(5-phospho-D-ribosyl)imidazole-4-carboxamide. The protein operates within purine metabolism; IMP biosynthesis via de novo pathway; 5-formamido-1-(5-phospho-D-ribosyl)imidazole-4-carboxamide from 5-amino-1-(5-phospho-D-ribosyl)imidazole-4-carboxamide (10-formyl THF route): step 1/1. Its pathway is purine metabolism; IMP biosynthesis via de novo pathway; IMP from 5-formamido-1-(5-phospho-D-ribosyl)imidazole-4-carboxamide: step 1/1. The protein is Bifunctional purine biosynthesis protein PurH of Halalkalibacterium halodurans (strain ATCC BAA-125 / DSM 18197 / FERM 7344 / JCM 9153 / C-125) (Bacillus halodurans).